The primary structure comprises 906 residues: Protein translocase subunit SecA (906 aa).

ATP-binding positions include glutamine 89, glycine 107–threonine 111, and aspartate 502. Residues valine 868 to asparagine 887 are disordered. 4 residues coordinate Zn(2+): cysteine 890, cysteine 892, cysteine 901, and histidine 902.

This sequence belongs to the SecA family. Monomer and homodimer. Part of the essential Sec protein translocation apparatus which comprises SecA, SecYEG and auxiliary proteins SecDF-YajC and YidC. Zn(2+) serves as cofactor.

Its subcellular location is the cell inner membrane. It is found in the cytoplasm. It catalyses the reaction ATP + H2O + cellular proteinSide 1 = ADP + phosphate + cellular proteinSide 2.. Functionally, part of the Sec protein translocase complex. Interacts with the SecYEG preprotein conducting channel. Has a central role in coupling the hydrolysis of ATP to the transfer of proteins into and across the cell membrane, serving both as a receptor for the preprotein-SecB complex and as an ATP-driven molecular motor driving the stepwise translocation of polypeptide chains across the membrane. This chain is Protein translocase subunit SecA, found in Brucella abortus (strain S19).